The primary structure comprises 211 residues: tRNA (guanine-N(7)-)-methyltransferase (211 aa).

Residues Asp-40, Glu-65, Asn-92, and Asp-118 each coordinate S-adenosyl-L-methionine. The active site involves Asp-118. Lys-122 and Asp-154 together coordinate substrate.

This sequence belongs to the class I-like SAM-binding methyltransferase superfamily. TrmB family.

It catalyses the reaction guanosine(46) in tRNA + S-adenosyl-L-methionine = N(7)-methylguanosine(46) in tRNA + S-adenosyl-L-homocysteine. The protein operates within tRNA modification; N(7)-methylguanine-tRNA biosynthesis. In terms of biological role, catalyzes the formation of N(7)-methylguanine at position 46 (m7G46) in tRNA. The polypeptide is tRNA (guanine-N(7)-)-methyltransferase (Microcystis aeruginosa (strain NIES-843 / IAM M-2473)).